The chain runs to 335 residues: MIKEAILKVVNGNDLNAKEAYGAMDEIMSGESSEVQMSAYLTALSMKGETIEEITASTKAMRAHCVKLLNDEEVLEIVGTGGDGSNTFNISTTSSIVISAAGVPVAKHGNRSASSKCGAADVLEALGVNIYIEPEKSLKILKEINLCFLFAQNYHLAMKFVAGVRKELSIRTIFNILGPLTNPAGATMQVLGVYDESLVKPLCEVLKNVGVKSALSVYGQDGLDEISVSDKTSVCELRDGRLKCYEIAPEDFGMERCSKEDLVGGNPRENAEITLSILNGQKGPKRNAVVLNSAAALYVAGKADSIEDGVRLASEIIDSGRAKKQLEKFIEYTNS.

5-phospho-alpha-D-ribose 1-diphosphate-binding positions include G79, G82–D83, T87, N89–T92, K107–S115, and A119. G79 contributes to the anthranilate binding site. Mg(2+) is bound at residue S91. Position 110 (N110) interacts with anthranilate. Anthranilate is bound at residue R165. Residues D224 and E225 each coordinate Mg(2+).

The protein belongs to the anthranilate phosphoribosyltransferase family. As to quaternary structure, homodimer. It depends on Mg(2+) as a cofactor.

The enzyme catalyses N-(5-phospho-beta-D-ribosyl)anthranilate + diphosphate = 5-phospho-alpha-D-ribose 1-diphosphate + anthranilate. It participates in amino-acid biosynthesis; L-tryptophan biosynthesis; L-tryptophan from chorismate: step 2/5. Its function is as follows. Catalyzes the transfer of the phosphoribosyl group of 5-phosphorylribose-1-pyrophosphate (PRPP) to anthranilate to yield N-(5'-phosphoribosyl)-anthranilate (PRA). This is Anthranilate phosphoribosyltransferase from Methanobrevibacter smithii (strain ATCC 35061 / DSM 861 / OCM 144 / PS).